The chain runs to 124 residues: Holo-[acyl-carrier-protein] synthase (124 aa).

Mg(2+)-binding residues include Asp8 and Glu60.

The protein belongs to the P-Pant transferase superfamily. AcpS family. Requires Mg(2+) as cofactor.

It localises to the cytoplasm. It carries out the reaction apo-[ACP] + CoA = holo-[ACP] + adenosine 3',5'-bisphosphate + H(+). Its function is as follows. Transfers the 4'-phosphopantetheine moiety from coenzyme A to a Ser of acyl-carrier-protein. This is Holo-[acyl-carrier-protein] synthase from Wolbachia pipientis subsp. Culex pipiens (strain wPip).